The chain runs to 1299 residues: Probable membrane antigen 75 (1299 aa).

It is found in the virion tegument. In Saimiriine herpesvirus 2 (strain 11) (SaHV-2), this protein is Probable membrane antigen 75 (75).